The primary structure comprises 461 residues: D-phenylhydantoinase (461 aa).

A divalent metal cation contacts are provided by H59, H61, and K151. K151 bears the N6-carboxylysine mark. Y156 provides a ligand contact to substrate. The a divalent metal cation site is built by H182 and H239. Substrate is bound at residue S286. Residue D313 participates in a divalent metal cation binding. Substrate is bound at residue N335.

This sequence belongs to the metallo-dependent hydrolases superfamily. Hydantoinase/dihydropyrimidinase family. In terms of assembly, homotetramer. Requires a divalent metal cation as cofactor. Carboxylation allows a single lysine to coordinate two divalent metal cations.

It carries out the reaction D-5-phenylhydantoin + H2O = N-carbamoyl-D-phenylglycine + H(+). In terms of biological role, catalyzes the stereospecific hydrolysis of the cyclic amide bond of D-hydantoin derivatives with an aromatic side chains at the 5'-position. Has no activity on dihydropyrimidines. The physiological function is unknown. In Escherichia coli O6:K15:H31 (strain 536 / UPEC), this protein is D-phenylhydantoinase.